The chain runs to 230 residues: 2,3-bisphosphoglycerate-dependent phosphoglycerate mutase (230 aa).

Residues 8 to 15 (RHGESEWN), 21 to 22 (TG), arginine 60, 87 to 90 (ERHY), lysine 98, 114 to 115 (RR), and 183 to 184 (GN) each bind substrate. Catalysis depends on histidine 9, which acts as the Tele-phosphohistidine intermediate. Glutamate 87 functions as the Proton donor/acceptor in the catalytic mechanism.

It belongs to the phosphoglycerate mutase family. BPG-dependent PGAM subfamily.

It catalyses the reaction (2R)-2-phosphoglycerate = (2R)-3-phosphoglycerate. It participates in carbohydrate degradation; glycolysis; pyruvate from D-glyceraldehyde 3-phosphate: step 3/5. In terms of biological role, catalyzes the interconversion of 2-phosphoglycerate and 3-phosphoglycerate. This chain is 2,3-bisphosphoglycerate-dependent phosphoglycerate mutase, found in Streptococcus thermophilus (strain CNRZ 1066).